Consider the following 270-residue polypeptide: Diaminopimelate epimerase (270 aa).

Residues Asn15, Gln49, and Asn66 each contribute to the substrate site. The Proton donor role is filled by Cys75. Residues 76–77 (GN), Asn155, Asn187, and 204–205 (ER) each bind substrate. Cys213 functions as the Proton acceptor in the catalytic mechanism. 214–215 (GS) contributes to the substrate binding site.

This sequence belongs to the diaminopimelate epimerase family. As to quaternary structure, homodimer.

Its subcellular location is the cytoplasm. It catalyses the reaction (2S,6S)-2,6-diaminopimelate = meso-2,6-diaminopimelate. It functions in the pathway amino-acid biosynthesis; L-lysine biosynthesis via DAP pathway; DL-2,6-diaminopimelate from LL-2,6-diaminopimelate: step 1/1. Catalyzes the stereoinversion of LL-2,6-diaminopimelate (L,L-DAP) to meso-diaminopimelate (meso-DAP), a precursor of L-lysine and an essential component of the bacterial peptidoglycan. This Rickettsia prowazekii (strain Madrid E) protein is Diaminopimelate epimerase.